The following is a 101-amino-acid chain: Putative septation protein SpoVG (101 aa).

The protein belongs to the SpoVG family.

Its function is as follows. Could be involved in septation. In Staphylococcus saprophyticus subsp. saprophyticus (strain ATCC 15305 / DSM 20229 / NCIMB 8711 / NCTC 7292 / S-41), this protein is Putative septation protein SpoVG.